The following is a 246-amino-acid chain: MADEMETKGEKKYKYSIIIPTYNERLNIAIIVYLIFKHLRDVDFEIIVVDDGSPDGTQEIVKQLQQLYGEDRILLRARAKKLGLGTAYIHGLKHATGDFVVIMDADLSHHPKYLPSFIKKQLETNASIVTGTRYVKGGGVHGWNLMRKLTSRGANVLAQTLLWPGVSDLTGSFRLYKKSALEDVISSCVSKGYVFQMEMIVRATRKGYHIEEVPITFVDRVFGTSKLGGSEIVEYLKGLVYLLLTT.

Positions 20, 22, 24, 49, 51, 104, 105, 106, 133, 220, and 226 each coordinate GDP-alpha-D-mannose. Asp-106 provides a ligand contact to Mg(2+). Position 106 (Asp-106) interacts with Mn(2+).

Belongs to the glycosyltransferase 2 family. Component of the dolichol-phosphate mannose (DPM) synthase complex composed of DPMS1, DPMS2 and DPMS3; in the complex interacts directly with DPMS3. Mg(2+) is required as a cofactor. Mn(2+) serves as cofactor. It depends on Ca(2+) as a cofactor.

It is found in the endoplasmic reticulum membrane. The enzyme catalyses a di-trans,poly-cis-dolichyl phosphate + GDP-alpha-D-mannose = a di-trans,poly-cis-dolichyl beta-D-mannosyl phosphate + GDP. It participates in protein modification; protein glycosylation. Transfers mannose from GDP-mannose to dolichol monophosphate to form dolichol phosphate mannose (Dol-P-Man) which is the mannosyl donor in pathways leading to N-glycosylation, glycosyl phosphatidylinositol membrane anchoring, and O-mannosylation of proteins; catalytic subunit of the dolichol-phosphate mannose (DPM) synthase complex. Plays a role in plant development and physiology, sensitivity to ammonium stress and endoplasmic reticulum stress response. In Arabidopsis thaliana (Mouse-ear cress), this protein is Dolichol-phosphate mannosyltransferase subunit 1.